Consider the following 387-residue polypeptide: Methionine aminopeptidase 1 (387 aa).

S2 is modified (N-acetylserine). A propeptide spanning residues 2–10 is cleaved from the precursor; it reads STATTTVTT. A C6H2-type zinc finger spans residues 19-73; the sequence is KIYCSGLQCGRETSSQMKCPVCLKQGIVSIFCDTSCYENNYKAHKALHNAKDGLE. 8 residues coordinate Zn(2+): C22, C27, C37, C40, C50, C54, H62, and H66. H202 lines the a protein pocket. D219, D230, and H294 together coordinate Zn(2+). Residue H301 participates in a protein binding. Zn(2+) contacts are provided by E327 and E358.

Belongs to the peptidase M24A family. Methionine aminopeptidase type 1 subfamily. Associates with the 60S ribosomal subunit of the 80S translational complex. Zn(2+) is required as a cofactor. The cofactor is Co(2+). Requires Mn(2+) as cofactor. It depends on Fe(2+) as a cofactor.

It localises to the cytoplasm. It catalyses the reaction Release of N-terminal amino acids, preferentially methionine, from peptides and arylamides.. With respect to regulation, in contract to the MetAP 2 isoform, is not inhibited by the fungal metabolite fumagillin, an antiangiogenic drug. Its function is as follows. Cotranslationally removes the N-terminal methionine from nascent proteins. The N-terminal methionine is often cleaved when the second residue in the primary sequence is small and uncharged (Met-Ala-, Cys, Gly, Pro, Ser, Thr, or Val). Plays the major role in N-terminal methionine removal. Less efficient when the second residue is Val. This Saccharomyces cerevisiae (strain ATCC 204508 / S288c) (Baker's yeast) protein is Methionine aminopeptidase 1 (MAP1).